The sequence spans 226 residues: Thioredoxin domain-containing protein 9 (226 aa).

In terms of domain architecture, Thioredoxin spans 52 to 180 (LEALKKAQQQ…TTETLEWRLG (129 aa)). Phosphoserine is present on residues serine 188, serine 221, and serine 223.

Forms ternary complexes with the chaperonin TCP1 complex, spanning the cylindrical chaperonin cavity and contacting at least 2 subunits.

The protein localises to the cytoplasm. Its subcellular location is the nucleus. The protein resides in the cytoskeleton. It is found in the microtubule organizing center. It localises to the centrosome. The protein localises to the midbody. Its function is as follows. Significantly diminishes the chaperonin TCP1 complex ATPase activity, thus negatively impacts protein folding, including that of actin or tubulin. This Bos taurus (Bovine) protein is Thioredoxin domain-containing protein 9 (TXNDC9).